The following is a 147-amino-acid chain: Transcriptional repressor NrdR (147 aa).

The segment at 3–34 (CPYCGNVETTVVETRESDEGDAVRRRRRCSAC) is a zinc-finger region. Residues 49–139 (PAVVKKNGDR…VYREFEDIDA (91 aa)) form the ATP-cone domain.

The protein belongs to the NrdR family. It depends on Zn(2+) as a cofactor.

Functionally, negatively regulates transcription of bacterial ribonucleotide reductase nrd genes and operons by binding to NrdR-boxes. This Leptothrix cholodnii (strain ATCC 51168 / LMG 8142 / SP-6) (Leptothrix discophora (strain SP-6)) protein is Transcriptional repressor NrdR.